The following is a 349-amino-acid chain: Anthranilate phosphoribosyltransferase (349 aa).

5-phospho-alpha-D-ribose 1-diphosphate-binding positions include G82, 85-86 (GD), 92-95 (NVST), 110-118 (KHGNRAVSG), and S122. G82 is a binding site for anthranilate. A Mg(2+)-binding site is contributed by S94. N113 contacts anthranilate. Position 168 (R168) interacts with anthranilate. Mg(2+) contacts are provided by D227 and E228.

This sequence belongs to the anthranilate phosphoribosyltransferase family. Homodimer. Mg(2+) serves as cofactor.

The catalysed reaction is N-(5-phospho-beta-D-ribosyl)anthranilate + diphosphate = 5-phospho-alpha-D-ribose 1-diphosphate + anthranilate. The protein operates within amino-acid biosynthesis; L-tryptophan biosynthesis; L-tryptophan from chorismate: step 2/5. Its function is as follows. Catalyzes the transfer of the phosphoribosyl group of 5-phosphorylribose-1-pyrophosphate (PRPP) to anthranilate to yield N-(5'-phosphoribosyl)-anthranilate (PRA). This Pseudomonas putida (strain ATCC 47054 / DSM 6125 / CFBP 8728 / NCIMB 11950 / KT2440) protein is Anthranilate phosphoribosyltransferase.